The following is an 82-amino-acid chain: Small ribosomal subunit protein uS17 (82 aa).

The protein belongs to the universal ribosomal protein uS17 family. Part of the 30S ribosomal subunit.

In terms of biological role, one of the primary rRNA binding proteins, it binds specifically to the 5'-end of 16S ribosomal RNA. The sequence is that of Small ribosomal subunit protein uS17 from Shewanella halifaxensis (strain HAW-EB4).